Reading from the N-terminus, the 234-residue chain is 2-C-methyl-D-erythritol 4-phosphate cytidylyltransferase (234 aa).

The protein belongs to the IspD/TarI cytidylyltransferase family. IspD subfamily.

The enzyme catalyses 2-C-methyl-D-erythritol 4-phosphate + CTP + H(+) = 4-CDP-2-C-methyl-D-erythritol + diphosphate. It participates in isoprenoid biosynthesis; isopentenyl diphosphate biosynthesis via DXP pathway; isopentenyl diphosphate from 1-deoxy-D-xylulose 5-phosphate: step 2/6. Functionally, catalyzes the formation of 4-diphosphocytidyl-2-C-methyl-D-erythritol from CTP and 2-C-methyl-D-erythritol 4-phosphate (MEP). This is 2-C-methyl-D-erythritol 4-phosphate cytidylyltransferase from Photobacterium profundum (strain SS9).